A 216-amino-acid chain; its full sequence is Probable transaldolase (216 aa).

Lys-84 functions as the Schiff-base intermediate with substrate in the catalytic mechanism.

Belongs to the transaldolase family. Type 3B subfamily.

The protein localises to the cytoplasm. The catalysed reaction is D-sedoheptulose 7-phosphate + D-glyceraldehyde 3-phosphate = D-erythrose 4-phosphate + beta-D-fructose 6-phosphate. Its pathway is carbohydrate degradation; pentose phosphate pathway; D-glyceraldehyde 3-phosphate and beta-D-fructose 6-phosphate from D-ribose 5-phosphate and D-xylulose 5-phosphate (non-oxidative stage): step 2/3. Its function is as follows. Transaldolase is important for the balance of metabolites in the pentose-phosphate pathway. This is Probable transaldolase from Exiguobacterium sp. (strain ATCC BAA-1283 / AT1b).